The chain runs to 200 residues: Late protein I196L (200 aa).

Tandem repeats lie at residues serine 28–serine 48 and serine 49–serine 69. The 3; approximate repeat unit spans residues serine 70 to serine 91.

This sequence belongs to the asfivirus I196L family.

In African swine fever virus (isolate Tick/South Africa/Pretoriuskop Pr4/1996) (ASFV), this protein is Late protein I196L.